A 45-amino-acid chain; its full sequence is Large ribosomal subunit protein bL36 (45 aa).

The segment at 26 to 45 is disordered; it reads VINKKDPNRKQRQKGPARKK. The span at 35-45 shows a compositional bias: basic residues; that stretch reads KQRQKGPARKK.

Belongs to the bacterial ribosomal protein bL36 family.

This is Large ribosomal subunit protein bL36 from Protochlamydia amoebophila (strain UWE25).